A 425-amino-acid polypeptide reads, in one-letter code: bZIP transcription factor RISBZ2 (425 aa).

Disordered stretches follow at residues 1–50 and 169–257; these read MERV…GGGG and NSIG…AAHL. The segment covering 30-50 has biased composition (gly residues); sequence QGGGGVASGGGGGVAGGGGGG. Polar residues predominate over residues 171-182; it reads IGGNATPVQNML. Acidic residues predominate over residues 213 to 222; that stretch reads SDDDDMEGEA. Positions 231-247 are enriched in basic and acidic residues; sequence ADQRLQRRKQSNRESAR. The bZIP domain maps to 232-295; that stretch reads DQRLQRRKQS…NDAAVDNRVL (64 aa). The segment at 234-253 is basic motif; that stretch reads RLQRRKQSNRESARRSRSRK. Positions 260–274 are leucine-zipper; that stretch reads LEAQVSQLRVENSSL. A disordered region spans residues 334–354; sequence MPFNSSPSEATSDAAVPIQDD.

Heterodimer with RISBZ1/BZIP58.

The protein localises to the nucleus. In terms of biological role, transcriptional activator that binds to the DNA specific sequence 5'-GCCACGT[AC]AG-3' found in the alpha-globulin gene promoter. Does not bind to promoters of other major storage genes such as glutelin, prolamin and albumin. Binds to the DNA specific sequence 5'-TGAGTCA-3' found in seed storage protein gene promoters. This chain is bZIP transcription factor RISBZ2, found in Oryza sativa subsp. japonica (Rice).